The primary structure comprises 185 residues: Peptidyl-tRNA hydrolase (185 aa).

Tyrosine 15 is a binding site for tRNA. The active-site Proton acceptor is the histidine 20. Tyrosine 64, asparagine 66, and asparagine 112 together coordinate tRNA.

The protein belongs to the PTH family. Monomer.

Its subcellular location is the cytoplasm. It catalyses the reaction an N-acyl-L-alpha-aminoacyl-tRNA + H2O = an N-acyl-L-amino acid + a tRNA + H(+). In terms of biological role, hydrolyzes ribosome-free peptidyl-tRNAs (with 1 or more amino acids incorporated), which drop off the ribosome during protein synthesis, or as a result of ribosome stalling. Its function is as follows. Catalyzes the release of premature peptidyl moieties from peptidyl-tRNA molecules trapped in stalled 50S ribosomal subunits, and thus maintains levels of free tRNAs and 50S ribosomes. In Porphyromonas gingivalis (strain ATCC BAA-308 / W83), this protein is Peptidyl-tRNA hydrolase.